Reading from the N-terminus, the 892-residue chain is NACHT, LRR and PYD domains-containing protein 6 (892 aa).

Residues 1 to 103 (MDQPEAPCSS…AAQLQERRLQ (103 aa)) form the Pyrin domain. A disordered region spans residues 158-181 (APEEAMGPAEEPEPGRARRSDTHT). Positions 170–181 (EPGRARRSDTHT) are enriched in basic and acidic residues. The NACHT domain maps to 196–513 (LTVVLQGPAG…EFLAALSYLL (318 aa)). 202-209 (GPAGIGKT) lines the ATP pocket. Residues 352–356 (KDKKK) form a disordered region. The LRR 1 repeat unit spans residues 462 to 487 (EKELEQLELRGSKVQTLFLSKKELPG). The interval 590–614 (APEVTEGAKGLEDTEEPEEEEEGEE) is disordered. Over residues 602-614 (DTEEPEEEEEGEE) the composition is skewed to acidic residues. LRR repeat units lie at residues 727 to 747 (LCHL…VCRD), 755 to 778 (APAL…MLSE), 811 to 834 (SPAL…YLCA), and 845 to 868 (TLSL…KRAK).

It belongs to the NLRP family. Homomultimer; forms the NLRP6 inflammasome polymeric complex, a filament composed of homopolymers in response to pathogens and other damage-associated signals. The core of NLRP6 inflammasomes consists of a signal sensor component (NLRP6), an adapter (PYCARD/ASC), which recruits effector pro-inflammatory caspases (CASP1 and CASP4). Interacts (via pyrin domain) with PYCARD/ASC (via pyrin domain); interaction takes place following NLRP6 activation and formation of liquid-liquid phase separation (LLPS), initiating nucleation which greatly enhances further addition of soluble PYCARD/ASC molecules to the speck in a prion-like polymerization process. Clustered PYCARD/ASC nucleates the formation of CASP1 (or possibly CASP4) filaments through the interaction of their respective CARD domains, acting as a platform for CASP1 polymerization. CASP1 filament formation increases local enzyme concentration, resulting in trans-autocleavage and activation. Active CASP1 then processes IL1B and IL18 precursors, leading to the release of mature cytokines in the extracellular milieu and inflammatory response. Interacts with DHX15. Post-translationally, polyubiquitinated with 'Lys-63'-linked chains, promoting the interaction with PYCARD/ASC and formation of the NLRP6 inflammasome. Deubiquitination by CYLD decreases the interaction with PYCARD/ASC. Expressed in peripheral blood leukocytes, predominantly in granulocytes and, at lower levels, in CD4(+) and CD8(+) T-cells. Expressed in colonic myofibroblasts (at protein level).

The protein resides in the cytoplasm. It localises to the cytosol. It is found in the inflammasome. Its subcellular location is the cell membrane. The protein localises to the nucleus membrane. In terms of biological role, acts as the sensor component of the NLRP6 inflammasome, which mediates inflammasome activation in response to various pathogen-associated signals, leading to maturation and secretion of IL1B and IL18. Inflammasomes are supramolecular complexes that assemble in the cytosol in response to pathogens and other damage-associated signals and play critical roles in innate immunity and inflammation. Acts as a recognition receptor (PRR): recognizes and binds specific pathogens and other damage-associated signals, such as lipoteichoic acid (LTA), a cell-wall component of Gram-positive bacteria, or double stranded RNA (dsRNA). May also recognize and bind lipopolysaccharide (LPS), a major component of the outer membrane of Gram-negative bacteria; however, LPS is probably not a major activator of the NLRP6 inflammasome. Following LTA- or dsRNA-binding, NLRP6 undergoes liquid-liquid phase separation (LLPS), enhancing multivalent interactions, an essential step for the formation of the NLRP6 inflammasome polymeric complex. The NLRP6 inflammasome acts by promoting recruitment of effector pro-inflammatory caspases (CASP1 and/or CASP4) that catalyze maturation and secretion of IL1B and IL18 in the extracellular milieu. The NLRP6 inflammasome plays a central role in the maintenance of epithelial integrity and host defense against microbial infections in the intestine. Required to restrict infection against Gram-positive bacteria by recognizing lipoteichoic acid (LTA), leading to recruitment of CASP4 and CASP1, and subsequent maturation and secretion of IL1B and IL18. Involved in intestinal antiviral innate immunity together with DHX15: recognizes and binds viral dsRNA to restrict infection by enteric viruses through the interferon pathway and GSDMD-dependent release of IL18. Required to prevent infection by the apicomplexan parasite Cryptosporidium in enterocytes by promoting GSDMD-dependent release of IL18. The NLRP6 inflammasome may also regulate the gut microbiota composition by acting as a sensor of microbiota-associated metabolites to form a PYCARD/ASC-dependent inflammasome for downstream IL18 release and secretion of antimicrobial peptides. Essential for gut mucosal self-renewal and proliferation. Regulate mucus secretion in an inflammasome- and autophagy-dependent manner to prevent invasion by enteric bacteria,. During systemic bacterial infections, the NLRP6 inflammasome negatively regulates neutrophil recruitment and neutrophil extracellular traps (NETs) formation. May promote peripheral nerve recovery following injury via an inflammasome-independent mechanism. The sequence is that of NACHT, LRR and PYD domains-containing protein 6 from Homo sapiens (Human).